The chain runs to 302 residues: Putative glycine N-acyltransferase-like protein 1B (302 aa).

This sequence belongs to the glycine N-acyltransferase family.

It carries out the reaction an acyl-CoA + L-glutamine = an N(2)-acyl-L-glutamine + CoA + H(+). Putative acyltransferase which transfers an acyl group to the N-terminus of glutamine. Can use phenylacetyl-CoA as an acyl donor. This chain is Putative glycine N-acyltransferase-like protein 1B, found in Homo sapiens (Human).